The chain runs to 915 residues: Pentatricopeptide repeat-containing protein At5g65560 (915 aa).

PPR repeat units lie at residues 182-216 (IIGCYNTLLNSLARFGLVDEMKQVYMEMLEDKVCP), 217-251 (NIYTYNKMVNGYCKLGNVEEANQYVSKIVEAGLDP), 252-286 (DFFTYTSLIMGYCQRKDLDSAFKVFNEMPLKGCRR), 287-321 (NEVAYTHLIHGLCVARRIDEAMDLFVKMKDDECFP), 322-356 (TVRTYTVLIKSLCGSERKSEALNLVKEMEETGIKP), 357-391 (NIHTYTVLIDSLCSQCKFEKARELLGQMLEKGLMP), 392-426 (NVITYNALINGYCKRGMIEDAVDVVELMESRKLSP), 427-460 (NTRTYNELIKGYCKSNVHKAMGVLNKMLERKVLP), 461-495 (DVVTYNSLIDGQCRSGNFDSAYRLLSLMNDRGLVP), 496-530 (DQWTYTSMIDSLCKSKRVEEACDLFDSLEQKGVNP), 531-565 (NVVMYTALIDGYCKAGKVDEAHLMLEKMLSKNCLP), 566-600 (NSLTFNALIHGLCADGKLKEATLLEEKMVKIGLQP), 601-635 (TVSTDTILIHRLLKDGDFDHAYSRFQQMLSSGTKP), 636-670 (DAHTYTTFIQTYCREGRLLDAEDMMAKMRENGVSP), 671-705 (DLFTYSSLIKGYGDLGQTNFAFDVLKRMRDTGCEP), 724-758 (KQKGSEPELCAMSNMMEFDTVVELLEKMVEHSVTP), 759-794 (NAKSYEKLILGICEVGNLRVAEKVFDHMQRNEGISP), 795-829 (SELVFNALLSCCCKLKKHNEAAKVVDDMICVGHLP), 830-864 (QLESCKVLICGLYKKGEKERGTSVFQNLLQCGYYE), and 865-899 (DELAWKIIIDGVGKQGLVEAFYELFNVMEKNGCKF).

It belongs to the PPR family. P subfamily.

The polypeptide is Pentatricopeptide repeat-containing protein At5g65560 (Arabidopsis thaliana (Mouse-ear cress)).